A 370-amino-acid chain; its full sequence is Cysteine-type anaerobic sulfatase-maturating enzyme (370 aa).

A Radical SAM core domain is found at 1–227 (MPPLSLLIKP…LKNLFDLWYE (227 aa)). Cysteine 15 and cysteine 19 together coordinate [4Fe-4S] cluster. Tyrosine 21 is an S-adenosyl-L-methionine binding site. Residue cysteine 22 participates in [4Fe-4S] cluster binding. 4 residues coordinate S-adenosyl-L-methionine: glycine 66, serine 122, arginine 134, and leucine 195. Positions 255, 261, and 276 each coordinate [4Fe-4S] cluster. Aspartate 277 serves as the catalytic Proton acceptor. 5 residues coordinate [4Fe-4S] cluster: cysteine 317, cysteine 320, cysteine 326, cysteine 330, and cysteine 348.

This sequence belongs to the radical SAM superfamily. Anaerobic sulfatase-maturating enzyme family. It depends on [4Fe-4S] cluster as a cofactor.

It carries out the reaction L-cysteinyl-[sulfatase] + S-adenosyl-L-methionine + H2O = 3-oxo-L-alanyl-[sulfatase] + hydrogen sulfide + 5'-deoxyadenosine + L-methionine + 2 H(+). The protein operates within protein modification; sulfatase oxidation. Functionally, involved in 'Cys-type' sulfatase maturation under anaerobic conditions. Catalyzes the post-translational modification of cysteine into 3-oxoalanine (also known as C(alpha)-formylglycine (FGly)), by a free radical chemical mechanism initiated via the reductive cleavage of S-adenosyl-L-methionine (SAM). The chain is Cysteine-type anaerobic sulfatase-maturating enzyme from Clostridium perfringens (strain 13 / Type A).